We begin with the raw amino-acid sequence, 708 residues long: Leukotoxin translocation ATP-binding protein LktB (708 aa).

The region spanning 1–126 is the Peptidase C39 domain; it reads MEANHQRNDL…ACYQGQLILV (126 aa). The ABC transmembrane type-1 domain maps to 155-437; sequence FLETLIVSIF…LAQLWQDFQQ (283 aa). Helical transmembrane passes span 159-179, 192-212, 270-290, 296-316, and 389-409; these read LIVS…FQVV, LNII…LSGL, ALTS…MWYY, LVIL…SPIL, and VMVI…LSIG. Residues 469–704 form the ABC transporter domain; it reads IAFKNIRFRY…SNGLYSYLHQ (236 aa). 503–510 serves as a coordination point for ATP; that stretch reads GRSGSGKS.

The protein belongs to the ABC transporter superfamily. Protein-1 exporter (TC 3.A.1.109) family. Homodimer.

The protein localises to the cell inner membrane. The enzyme catalyses ATP + H2O + proteinSide 1 = ADP + phosphate + proteinSide 2.. In terms of biological role, part of the ABC transporter complex LktBD involved in leukotoxin export. Transmembrane domains (TMD) form a pore in the inner membrane and the ATP-binding domain (NBD) is responsible for energy generation. This Mannheimia glucosida protein is Leukotoxin translocation ATP-binding protein LktB (lktB).